The chain runs to 540 residues: Probable metabolite transport protein YFL040W (540 aa).

Residues 1–29 (MTAMKAIVWRLPKMPKIKITKTYEVTKIT) lie on the Cytoplasmic side of the membrane. The helical transmembrane segment at 30-50 (AILTLVGFIMGLEVPSLATFL) threads the bilayer. At 51–67 (TNKTFNEYFKYPTPLQQ) the chain is on the extracellular side. Residue Asn-52 is glycosylated (N-linked (GlcNAc...) asparagine). The helical transmembrane segment at 68–88 (GLLMGSTPLGGIMGCFICCIM) threads the bilayer. Residues 89–101 (NDRFSRIYQFQSG) are Cytoplasmic-facing. Residues 102–122 (IIIWNIVTLLNFCIWDILGLL) traverse the membrane as a helical segment. Over 123-126 (ICRM) the chain is Extracellular. Residues 127–147 (IKGMILGNFSILVASYANEVI) traverse the membrane as a helical segment. At 148-158 (PRGKRGSTMSY) the chain is on the cytoplasmic side. A helical transmembrane segment spans residues 159–179 (IQLCLTIGILVMHYLCIALSL). The Extracellular portion of the chain corresponds to 180–187 (WDSHFAFR). A helical transmembrane segment spans residues 188-208 (IAWCIGIIPGLLFWMASYALP). At 209–275 (ESYHWLVLHG…KKLPRGSFKP (67 aa)) the chain is on the cytoplasmic side. A helical transmembrane segment spans residues 276-296 (LILGMTLQLLVQFSGINIILG). The Extracellular portion of the chain corresponds to 297–313 (YITYICEIVGLEGNVKL). The chain crosses the membrane as a helical span at residues 314–334 (FTSSIPYFINMVLSLLPITFI). The Cytoplasmic portion of the chain corresponds to 335 to 341 (DYTSRKL). The chain crosses the membrane as a helical span at residues 342–362 (ITLLGGFPISGLLITIGALFV). Over 363–385 (KYGQDTKPIDGNRSLVWSIGENP) the chain is Extracellular. Residue Asn-374 is glycosylated (N-linked (GlcNAc...) asparagine). Residues 386 to 406 (FVGGWILTLCFLIVGIFAMSL) form a helical membrane-spanning segment. The Cytoplasmic portion of the chain corresponds to 407-428 (SSIPWVYTNEMLPSRVKVKGFA). A helical transmembrane segment spans residues 429–449 (ICVTFGWLGNFILTFLCPVMI). Residues 450-455 (ERLKGT) lie on the Extracellular side of the membrane. The helical transmembrane segment at 456–476 (TFIIFGSLTFLISLSVLIWFP) threads the bilayer. The Cytoplasmic portion of the chain corresponds to 477-540 (ETKGMSIEDI…KLKSDEEMII (64 aa)). The tract at residues 499–540 (NLHGEKGIKTPDSNSNGGSTRSSQEGQLHKPIKLKSDEEMII) is disordered. A compositionally biased stretch (polar residues) spans 509-524 (PDSNSNGGSTRSSQEG).

Belongs to the major facilitator superfamily. Sugar transporter (TC 2.A.1.1) family.

Its subcellular location is the membrane. The polypeptide is Probable metabolite transport protein YFL040W (Saccharomyces cerevisiae (strain ATCC 204508 / S288c) (Baker's yeast)).